We begin with the raw amino-acid sequence, 270 residues long: Phosphatidylglycerol--prolipoprotein diacylglyceryl transferase (270 aa).

Helical transmembrane passes span Leu-17–Gly-37, Ile-63–Tyr-83, and Ile-95–Ser-115. An a 1,2-diacyl-sn-glycero-3-phospho-(1'-sn-glycerol)-binding site is contributed by Arg-146. 3 helical membrane passes run Ser-182 to Ala-202, Gly-209 to Phe-229, and Met-243 to Trp-263.

It belongs to the Lgt family.

The protein localises to the cell inner membrane. The catalysed reaction is L-cysteinyl-[prolipoprotein] + a 1,2-diacyl-sn-glycero-3-phospho-(1'-sn-glycerol) = an S-1,2-diacyl-sn-glyceryl-L-cysteinyl-[prolipoprotein] + sn-glycerol 1-phosphate + H(+). It functions in the pathway protein modification; lipoprotein biosynthesis (diacylglyceryl transfer). Its function is as follows. Catalyzes the transfer of the diacylglyceryl group from phosphatidylglycerol to the sulfhydryl group of the N-terminal cysteine of a prolipoprotein, the first step in the formation of mature lipoproteins. In Paracidovorax citrulli (strain AAC00-1) (Acidovorax citrulli), this protein is Phosphatidylglycerol--prolipoprotein diacylglyceryl transferase.